The primary structure comprises 384 residues: FAD-dependent urate hydroxylase (384 aa).

FAD-binding positions include Gly11, 30–31 (EA), Ser43, and Val125. Substrate-binding positions include Asn178, Arg204, and 216-218 (YFF). FAD is bound by residues Asp285 and 295 to 299 (GQGGC).

This sequence belongs to the FAD-dependent urate hydroxylase family. It depends on FAD as a cofactor.

It carries out the reaction urate + NADH + O2 + H(+) = 5-hydroxyisourate + NAD(+) + H2O. The protein operates within purine metabolism; urate degradation. Functionally, catalyzes the hydroxylation of uric acid to 5-hydroxyisourate. The chain is FAD-dependent urate hydroxylase (hpxO) from Klebsiella pneumoniae.